The following is a 787-amino-acid chain: MAEPESSTAAAGGSRLRNACGGVLCAFTLLLIGVLAFSIRLFSVIKYESVIHEFDPYFNFRVTQFLSKNGIYEFWNWFDDRTWYPLGRVIGGTVYPGLTLTAGTIWWLLNSLNIPLSVETVCVFTAPIFSANASWATYLLTKEAKGTGAGLMAAAILAMVPSYISRSVAGSYDNEAVAIFALIFTFYLYVKTLNTGSLFYATLNALSYFYMVCSWGGYTFIINLIPIHVLLCIVTGRYSSRLYIAYAPLVILGTLLAALVPVVGFNAVMTSEHFASFLVFIILHVVALVYYIKGLLTPRLFKVAMTLVITVGLAVCFAVIAILIALVASSPTKGWSGRSLSLLDPTYASKYIPIIASVSEHQPPTWPSYFMDINVLAFLIPAGIISCFLPLSDASSFVVLYLVTAVYFSGVMVRLMLVLAPAACILSGIALSEAFDVLTRSVKYQLSKLFDDSPAASGDSSAESSSASTVSTNSAKNETRPEKTETAPKEKPSKKNRKKEKEVAESVPVKPKKEKKLLVLPMEASVLGILLLIVLGGFYVVHCVWAAAEAYSAPSIVLTSRSRDGLHVFDDFREAYAWLSHNTDVDDKVASWWDYGYQTTAMANRTVIVDNNTWNNTHIATVGTAMSSPEKAAWEIFNSLDVKYVLVVFGGLVGYPSDDINKFLWMVRIGGGVFPHIKEPDYLRDGNYRVDAQGTPTMLNCLMYKLCYYRFVETDGKGFDRVRGYEIGKKHFKLTHFEEVFTTHHWMVRIYKLKPQKNRVRGKLKKLKSGSKASSTNAAGRKKNPWQ.

Over 1-18 (MAEPESSTAAAGGSRLRN) the chain is Cytoplasmic. A helical transmembrane segment spans residues 19 to 39 (ACGGVLCAFTLLLIGVLAFSI). The Lumenal portion of the chain corresponds to 40–125 (RLFSVIKYES…LSVETVCVFT (86 aa)). The DXD motif 1 motif lies at 53–55 (EFD). Aspartate 55 is a Mn(2+) binding site. A helical transmembrane segment spans residues 126-144 (APIFSANASWATYLLTKEA). Topologically, residues 145 to 146 (KG) are cytoplasmic. The chain crosses the membrane as a helical span at residues 147–164 (TGAGLMAAAILAMVPSYI). Residues 165-175 (SRSVAGSYDNE) lie on the Lumenal side of the membrane. 2 residues coordinate Mn(2+): aspartate 173 and glutamate 175. The DXD motif 2 signature appears at 173–175 (DNE). A helical membrane pass occupies residues 176 to 195 (AVAIFALIFTFYLYVKTLNT). Topologically, residues 196-197 (GS) are cytoplasmic. Residues 198–212 (LFYATLNALSYFYMV) form a helical membrane-spanning segment. Topologically, residues 213–217 (CSWGG) are lumenal. The chain crosses the membrane as a helical span at residues 218–234 (YTFIINLIPIHVLLCIV). Residues 235 to 239 (TGRYS) lie on the Cytoplasmic side of the membrane. Residues 240–265 (SRLYIAYAPLVILGTLLAALVPVVGF) form a helical membrane-spanning segment. Residues 266–273 (NAVMTSEH) lie on the Lumenal side of the membrane. The helical transmembrane segment at 274–293 (FASFLVFIILHVVALVYYIK) threads the bilayer. Residues 294–306 (GLLTPRLFKVAMT) lie on the Cytoplasmic side of the membrane. A helical membrane pass occupies residues 307-327 (LVITVGLAVCFAVIAILIALV). Topologically, residues 328–365 (ASSPTKGWSGRSLSLLDPTYASKYIPIIASVSEHQPPT) are lumenal. An SVSE motif motif is present at residues 357-360 (SVSE). Residues 366 to 388 (WPSYFMDINVLAFLIPAGIISCF) form a helical membrane-spanning segment. The Cytoplasmic portion of the chain corresponds to 389–394 (LPLSDA). Residues 395 to 411 (SSFVVLYLVTAVYFSGV) form a helical membrane-spanning segment. Topologically, residues 412–415 (MVRL) are lumenal. Arginine 414 provides a ligand contact to dolichyl diphosphooligosaccharide. Residues 416–437 (MLVLAPAACILSGIALSEAFDV) traverse the membrane as a helical segment. Over 438 to 525 (LTRSVKYQLS…KLLVLPMEAS (88 aa)) the chain is Cytoplasmic. Residues 453-475 (SPAASGDSSAESSSASTVSTNSA) show a composition bias toward low complexity. The segment at 453–507 (SPAASGDSSAESSSASTVSTNSAKNETRPEKTETAPKEKPSKKNRKKEKEVAESV) is disordered. Residues 477-504 (NETRPEKTETAPKEKPSKKNRKKEKEVA) are compositionally biased toward basic and acidic residues. Residues 526 to 546 (VLGILLLIVLGGFYVVHCVWA) traverse the membrane as a helical segment. Over 547 to 787 (AAEAYSAPSI…AAGRKKNPWQ (241 aa)) the chain is Lumenal. An interacts with target acceptor peptide in protein substrate region spans residues 592 to 594 (WWD). The short motif at 592–596 (WWDYG) is the WWDYG motif element. Tyrosine 597 contacts dolichyl diphosphooligosaccharide. Asparagine 604 and asparagine 611 each carry an N-linked (GlcNAc...) asparagine glycan. Residue asparagine 615 is glycosylated (N-linked (GlcNAc...) (high mannose) asparagine). Positions 659–666 (DINKFLWM) match the DK motif motif. Residues 759–769 (RVRGKLKKLKS) show a composition bias toward basic residues. The segment at 759-787 (RVRGKLKKLKSGSKASSTNAAGRKKNPWQ) is disordered.

This sequence belongs to the STT3 family. Component of the oligosaccharyltransferase (OST) complex. Requires Mg(2+) as cofactor. Mn(2+) serves as cofactor.

It localises to the endoplasmic reticulum membrane. The catalysed reaction is a di-trans,poly-cis-dolichyl diphosphooligosaccharide + L-asparaginyl-[protein] = N(4)-(oligosaccharide-(1-&gt;4)-N-acetyl-beta-D-glucosaminyl-(1-&gt;4)-N-acetyl-beta-D-glucosaminyl)-L-asparaginyl-[protein] + a di-trans,poly-cis-dolichyl diphosphate + H(+). Its pathway is protein modification; protein glycosylation. Its function is as follows. Catalytic subunit of the oligosaccharyl transferase (OST) complex that catalyzes the initial transfer of a defined glycan (Glc(3)Man(9)GlcNAc(2) in eukaryotes) from the lipid carrier dolichol-pyrophosphate to an asparagine residue within an Asn-X-Ser/Thr consensus motif in nascent polypeptide chains, the first step in protein N-glycosylation. N-glycosylation occurs cotranslationally and the complex associates with the Sec61 complex at the channel-forming translocon complex that mediates protein translocation across the endoplasmic reticulum (ER). All subunits are required for a maximal enzyme activity. This subunit contains the active site and the acceptor peptide and donor lipid-linked oligosaccharide (LLO) binding pockets. The protein is Dolichyl-diphosphooligosaccharide--protein glycosyltransferase subunit STT3A (STT3A) of Oryza sativa subsp. japonica (Rice).